Here is a 357-residue protein sequence, read N- to C-terminus: Histidine biosynthesis bifunctional protein HisB (357 aa).

The interval 1–167 (MNDKILFIDR…IHKYLMQNSH (167 aa)) is histidinol-phosphatase. Asp-9 (nucleophile) is an active-site residue. Mg(2+) contacts are provided by Asp-9 and Asp-11. The Proton donor role is filled by Asp-11. Residues Cys-93, His-95, Cys-101, and Cys-103 each coordinate Zn(2+). Asp-130 lines the Mg(2+) pocket. The segment at 168–357 (RVAHIQRITN…QIPSSKGILL (190 aa)) is imidazoleglycerol-phosphate dehydratase.

It in the N-terminal section; belongs to the histidinol-phosphatase family. This sequence in the C-terminal section; belongs to the imidazoleglycerol-phosphate dehydratase family. It depends on Mg(2+) as a cofactor. Requires Zn(2+) as cofactor.

The protein resides in the cytoplasm. The catalysed reaction is D-erythro-1-(imidazol-4-yl)glycerol 3-phosphate = 3-(imidazol-4-yl)-2-oxopropyl phosphate + H2O. It catalyses the reaction L-histidinol phosphate + H2O = L-histidinol + phosphate. It functions in the pathway amino-acid biosynthesis; L-histidine biosynthesis; L-histidine from 5-phospho-alpha-D-ribose 1-diphosphate: step 6/9. Its pathway is amino-acid biosynthesis; L-histidine biosynthesis; L-histidine from 5-phospho-alpha-D-ribose 1-diphosphate: step 8/9. In Blochmanniella floridana, this protein is Histidine biosynthesis bifunctional protein HisB.